The chain runs to 877 residues: Oligopeptide transporter 2 (877 aa).

Residues 1 to 167 (MSETVKDKVI…DPTIPVETFR (167 aa)) are Cytoplasmic-facing. A helical membrane pass occupies residues 168–188 (AYFLAIIWSVIGSGFNEFFSH). A topological domain (extracellular) is located at residue arginine 189. Residues 190–210 (VVSISLNTPIIQMFLYICGKA) form a helical membrane-spanning segment. The Cytoplasmic portion of the chain corresponds to 211–240 (WAKTIPCWTITIRGRKYGINIDKPWTQKEQ). A helical transmembrane segment spans residues 241-261 (MFSTLLYAICQGAFYTHYNIL). The Extracellular segment spans residues 262–272 (TQKLFYHSAFS). Residues 273-293 (FGYQFLLSLSVQFIGFGFAGI) form a helical membrane-spanning segment. The Cytoplasmic segment spans residues 294-334 (LRKFVVYPARALWPTVMPTIAINKALLGKEKHESGMSRYKF). Residues 335–355 (FFLTFFIMFIYNWFPTYIINI) form a helical membrane-spanning segment. Topologically, residues 356–374 (LNTFNWMTWIKPSNINLAN) are extracellular. N-linked (GlcNAc...) asparagine glycosylation is present at asparagine 374. Residues 375–395 (ITGGVTGLGINPISSFDWNVI) form a helical membrane-spanning segment. Residues 396–404 (SFNSPLVYP) lie on the Cytoplasmic side of the membrane. A helical transmembrane segment spans residues 405-425 (FWSYLTQYLGCILAALIVIAV). Topologically, residues 426-480 (YYSNYMSCQYLPIFTNSLYTNTGHSFKVTEVLDSDNKLDVKKYQSYSPPYYSAGN) are extracellular. A helical membrane pass occupies residues 481–501 (LVSYGAFICAYPLMITWSFIV). At 502 to 553 (HSKLLFNAFKDWALNLWAMRKLKSWVTMFKSDYRALDDYDDPHSNAMKNYKE) the chain is on the cytoplasmic side. The helical transmembrane segment at 554 to 574 (VPDWWYFAILIGSLVVGIAVV) threads the bilayer. At 575-582 (EHYPTNTP) the chain is on the extracellular side. A helical membrane pass occupies residues 583–603 (VWGLFVCLGFNFVFLIPTTIL). Topologically, residues 604–614 (QATTGYSFGLN) are cytoplasmic. A helical membrane pass occupies residues 615 to 635 (LLIEMVMGYALPGNPIAIMIL). At 636–671 (KAFGYNIDGQADNYVSNLKIAHYCKIPPMALFRGQC) the chain is on the extracellular side. A helical membrane pass occupies residues 672–692 (VIVFIQIFVNLGVLNWQISNI). At 693-730 (KDFCTPHQNAKFTCPDAVTYYNASVVWGAIGPKRIFNY) the chain is on the cytoplasmic side. The chain crosses the membrane as a helical span at residues 731–751 (IYPIFKWCWLIGACIGIFFGV). Residues 752-766 (WKRWGKFYPRYFDPM) lie on the Extracellular side of the membrane. A helical transmembrane segment spans residues 767–789 (LFVGGMLNMSPPYNLMYYTSGMI). The Cytoplasmic segment spans residues 790–811 (VSYISQYYMKRHHLNLWEKYNY). The helical transmembrane segment at 812–832 (VLSAGFSTGLVLSAIIIFFAV) threads the bilayer. The Extracellular portion of the chain corresponds to 833–877 (QYKDTAFNWWGNTVPYAGADGVGYPLKNITDTANGYFGYAPGHYP). Asparagine 860 carries N-linked (GlcNAc...) asparagine glycosylation.

The protein belongs to the oligopeptide OPT transporter family.

It localises to the membrane. In terms of biological role, transports tetra- and pentapeptides. Does not transport glutathione. This is Oligopeptide transporter 2 (OPT2) from Saccharomyces cerevisiae (strain ATCC 204508 / S288c) (Baker's yeast).